The chain runs to 159 residues: Cell number regulator 4 (159 aa).

The helical transmembrane segment at 52–74 (LAGLLYCLLLHAGVAVVPCHCIY) threads the bilayer.

It belongs to the cornifelin family. As to expression, expressed in roots, coleoptiles, leaves, stalks, apical meristems, immature ears, endosperm, pericarp and tassel spikelets.

It is found in the membrane. The sequence is that of Cell number regulator 4 (CNR4) from Zea mays (Maize).